The following is a 107-amino-acid chain: Virulence factor PGA16 (107 aa).

The first 18 residues, 1 to 18, serve as a signal peptide directing secretion; sequence MRVFQIVYILIISNLIYA. The tract at residues 26 to 56 is disordered; sequence SHHHKNDNNIADNTNNNNNNNNNNNNNNITN. Residues 33–56 show a composition bias toward low complexity; the sequence is NNIADNTNNNNNNNNNNNNNNITN. N-linked (GlcNAc...) asparagine glycans are attached at residues Asn-53 and Asn-56. Residue Gly-76 is the site of GPI-anchor amidated glycine attachment. Positions 77–107 are cleaved as a propeptide — removed in mature form; that stretch reads VAAMGGILGQNGWFYGDAGLMAAIFGAMLLL.

It localises to the cell membrane. In terms of biological role, cell surface GPI-anchored protein required for virulence. Mediates hyphal ramification which is important for the interaction with host cells. This chain is Virulence factor PGA16 (PGA16), found in Candida albicans (strain SC5314 / ATCC MYA-2876) (Yeast).